A 347-amino-acid chain; its full sequence is Microtubule-associated protein Jupiter (347 aa).

Residues 1–14 are compositionally biased toward polar residues; it reads MISNFDCTDNQASS. Residues 1–33 are disordered; sequence MISNFDCTDNQASSKVLRPPGGGSSDIFGSEMP. At S24 the chain carries Phosphoserine. A phosphothreonine mark is found at T35 and T96. Residues S105, S134, and S145 each carry the phosphoserine modification. Disordered stretches follow at residues 127–193 and 303–347; these read HYNG…PTPP and GNPV…SGLW. Residues 132–145 show a composition bias toward low complexity; that stretch reads SGSVSSASSSVSSS. Positions 146–164 are enriched in polar residues; that stretch reads TENLKMNSGSRSVFRNMST. The segment covering 181–193 has biased composition (pro residues); it reads PPSPVPIEVPTPP.

This sequence belongs to the MAP Jupiter family.

It is found in the nucleus. The protein resides in the cytoplasm. Its subcellular location is the cytoskeleton. The protein localises to the spindle. Binds to all microtubule populations. This Drosophila yakuba (Fruit fly) protein is Microtubule-associated protein Jupiter.